A 557-amino-acid chain; its full sequence is Aerobic glycerol-3-phosphate dehydrogenase (557 aa).

21 to 49 (DLVIIGGGITGAGIALDASERGMKVALVE) contributes to the FAD binding site.

It belongs to the FAD-dependent glycerol-3-phosphate dehydrogenase family. FAD serves as cofactor.

The protein resides in the cytoplasm. The catalysed reaction is a quinone + sn-glycerol 3-phosphate = dihydroxyacetone phosphate + a quinol. It participates in polyol metabolism; glycerol degradation via glycerol kinase pathway; glycerone phosphate from sn-glycerol 3-phosphate (aerobic route): step 1/1. This chain is Aerobic glycerol-3-phosphate dehydrogenase (glpD), found in Staphylococcus aureus (strain USA300).